The chain runs to 498 residues: Tryptophan decarboxylase TDC2 (498 aa).

N6-(pyridoxal phosphate)lysine is present on Lys-316.

The protein belongs to the group II decarboxylase family. The cofactor is pyridoxal 5'-phosphate.

The enzyme catalyses L-tryptophan + H(+) = tryptamine + CO2. Involved in the biosynthesis of tryptamine. Supplies tryptamine for the indole moiety of camptothecin (CPT), an anti-cancer monoterpene alkaloid. Represents a key step in monoterpene indole alkaloid biosynthesis. Is specific for tryptophan, and inactive against tyrosine, phenylalanine and 3,4-dihydroxyphenylalanine (dopa). This is Tryptophan decarboxylase TDC2 from Camptotheca acuminata (Happy tree).